The primary structure comprises 483 residues: MFS-type transporter hepF (483 aa).

Residues 1 to 31 (METPAGKADRPRDHDSEQSQDNVVSWEGEDD) form a disordered region. Over residues 7 to 17 (KADRPRDHDSE) the composition is skewed to basic and acidic residues. The next 11 helical transmembrane spans lie at 89 to 109 (TIVVSIFVLGLAFGPLLAAPI), 124 to 144 (ILYTIFTVACGVSTNISMLIV), 147 to 167 (FFAGVTGSAPLTIGGGTVADL), 179 to 199 (FVTLGQAVAPAIGPVAGGFLT), 206 to 226 (WVFWLLTIVNGTITICQILFT), 276 to 296 (PISLIVALCCAVIYGILYVLV), 311 to 331 (IGISGLGYLGLGIGNLVGLWI), 357 to 377 (PMMILSGPVIAAGLFWYGWSV), 385 to 405 (MPIVGSGIVGLGNMFFFMPMV), 416 to 436 (AASAIAANAVLRSIGGAVLPL), and 448 to 468 (GWGNSILAFMALVFNPLLIAI).

This sequence belongs to the major facilitator superfamily.

Its subcellular location is the cell membrane. In terms of biological role, MFS-type transporter; part of the gene cluster that mediates the biosynthesis of heptelidic acid (HA), a sesquiterpene lactone that acts as an inhibitor of glyceraldehyde-3-phosphatedehydrogenase (GAPDH) and a growth inhibitor of the salt-tolerant lactic acid bacteria in soy sauce brewing. Might be required for efficient secretion of heptelidic acid. This Aspergillus oryzae (strain ATCC 42149 / RIB 40) (Yellow koji mold) protein is MFS-type transporter hepF (hepF).